We begin with the raw amino-acid sequence, 121 residues long: MTTQEIIEVIKGLSVLELNDLVKACEEEFGVSAAAGVVVAAAGAGAAAAEEKTEFDVELTEAGDQKVKVIKVVREITGLGLKEAKDVVDGAPKVVKEQASKEEAEEIKKKLEEVGAKVTLK.

It belongs to the bacterial ribosomal protein bL12 family. As to quaternary structure, homodimer. Part of the ribosomal stalk of the 50S ribosomal subunit. Forms a multimeric L10(L12)X complex, where L10 forms an elongated spine to which 2 to 4 L12 dimers bind in a sequential fashion. Binds GTP-bound translation factors.

In terms of biological role, forms part of the ribosomal stalk which helps the ribosome interact with GTP-bound translation factors. Is thus essential for accurate translation. The polypeptide is Large ribosomal subunit protein bL12 (Lachnospira eligens (strain ATCC 27750 / DSM 3376 / VPI C15-48 / C15-B4) (Eubacterium eligens)).